The sequence spans 558 residues: Arginine--tRNA ligase (558 aa).

The 'HIGH' region motif lies at 116 to 126; the sequence is ANPNGPLHVGH.

It belongs to the class-I aminoacyl-tRNA synthetase family.

It localises to the cytoplasm. It carries out the reaction tRNA(Arg) + L-arginine + ATP = L-arginyl-tRNA(Arg) + AMP + diphosphate. The protein is Arginine--tRNA ligase of Methanocorpusculum labreanum (strain ATCC 43576 / DSM 4855 / Z).